A 216-amino-acid chain; its full sequence is Elongation factor 1-beta (216 aa).

The protein belongs to the EF-1-beta/EF-1-delta family. In terms of assembly, EF-1 is composed of 4 subunits: alpha, beta, delta, and gamma. Interacts with actin.

It is found in the cytoplasm. EF-1-beta and EF-1-delta stimulate the exchange of GDP bound to EF-1-alpha to GTP. This is Elongation factor 1-beta (efa1B) from Dictyostelium discoideum (Social amoeba).